The sequence spans 392 residues: ESX-1 secretion-associated protein EspA (392 aa).

A disordered region spans residues 302–392 (TRQALRPRAD…GQKVLVRNVV (91 aa)). Positions 334 to 344 (QGMGGPVGMGG) are enriched in gly residues.

As to quaternary structure, homodimer; disulfide-linked.

It is found in the secreted. Functionally, required for secretion of EsxA (ESAT-6) and EsxB (CFP-10) and for virulence. In Mycobacterium tuberculosis (strain CDC 1551 / Oshkosh), this protein is ESX-1 secretion-associated protein EspA.